Here is a 254-residue protein sequence, read N- to C-terminus: 5'-nucleotidase SurE (254 aa).

Residues aspartate 8, aspartate 9, serine 38, and asparagine 91 each contribute to the a divalent metal cation site.

It belongs to the SurE nucleotidase family. The cofactor is a divalent metal cation.

It localises to the cytoplasm. It catalyses the reaction a ribonucleoside 5'-phosphate + H2O = a ribonucleoside + phosphate. In terms of biological role, nucleotidase that shows phosphatase activity on nucleoside 5'-monophosphates. The protein is 5'-nucleotidase SurE of Anaeromyxobacter sp. (strain Fw109-5).